Reading from the N-terminus, the 384-residue chain is Cysteine protease ATG4B (384 aa).

Cys-74 serves as the catalytic Nucleophile. Catalysis depends on residues Asp-269 and His-271. An LIR motif is present at residues 379 to 382 (FEIL).

The protein belongs to the peptidase C54 family.

The protein localises to the cytoplasm. The protein resides in the cytosol. It localises to the cytoplasmic vesicle. It is found in the autophagosome. Its subcellular location is the endoplasmic reticulum. The protein localises to the mitochondrion. The enzyme catalyses [protein]-C-terminal L-amino acid-glycyl-phosphatidylethanolamide + H2O = [protein]-C-terminal L-amino acid-glycine + a 1,2-diacyl-sn-glycero-3-phosphoethanolamine. It catalyses the reaction [protein]-C-terminal L-amino acid-glycyl-phosphatidylserine + H2O = [protein]-C-terminal L-amino acid-glycine + a 1,2-diacyl-sn-glycero-3-phospho-L-serine. Cysteine protease that plays a key role in autophagy by mediating both proteolytic activation and delipidation of ATG8 family proteins. Required for canonical autophagy (macroautophagy), non-canonical autophagy as well as for mitophagy. The protease activity is required for proteolytic activation of ATG8 family proteins: cleaves the C-terminal amino acid of ATG8 proteins to reveal a C-terminal glycine. Exposure of the glycine at the C-terminus is essential for ATG8 proteins conjugation to phosphatidylethanolamine (PE) and insertion to membranes, which is necessary for autophagy. Protease activity is also required to counteract formation of high-molecular weight conjugates of ATG8 proteins (ATG8ylation): acts as a deubiquitinating-like enzyme that removes ATG8 conjugated to other proteins, such as ATG3. In addition to the protease activity, also mediates delipidation of ATG8 family proteins. Catalyzes delipidation of PE-conjugated forms of ATG8 proteins during macroautophagy. Also involved in non-canonical autophagy, a parallel pathway involving conjugation of ATG8 proteins to single membranes at endolysosomal compartments, by catalyzing delipidation of ATG8 proteins conjugated to phosphatidylserine (PS). This chain is Cysteine protease ATG4B, found in Xenopus laevis (African clawed frog).